The primary structure comprises 252 residues: Pantothenate synthetase (252 aa).

ATP is bound at residue 29–36; the sequence is MGNLHAGH. The Proton donor role is filled by His-36. Gln-60 contributes to the (R)-pantoate binding site. Position 60 (Gln-60) interacts with beta-alanine. Position 146 to 149 (146 to 149) interacts with ATP; that stretch reads GEKD. Position 152 (Gln-152) interacts with (R)-pantoate. ATP-binding positions include Val-175 and 183-186; that span reads CSSR.

This sequence belongs to the pantothenate synthetase family. In terms of assembly, homodimer.

The protein resides in the cytoplasm. The enzyme catalyses (R)-pantoate + beta-alanine + ATP = (R)-pantothenate + AMP + diphosphate + H(+). Its pathway is cofactor biosynthesis; (R)-pantothenate biosynthesis; (R)-pantothenate from (R)-pantoate and beta-alanine: step 1/1. Its function is as follows. Catalyzes the condensation of pantoate with beta-alanine in an ATP-dependent reaction via a pantoyl-adenylate intermediate. The protein is Pantothenate synthetase of Legionella pneumophila (strain Lens).